Here is a 391-residue protein sequence, read N- to C-terminus: MNLLEQLRQMTVVVADTGDILAIQKFTPRDATTNPSLITAAAQMKEYQSIVDETLRQAKADLGSGATSREIVSLAVDRLAVAFGLKILQIIPGRVSTEVDARLSYDTAATVQKARELISQYEAAGVGRDRVLIKIAATWEGIRAAEILEKEGIHCNLTLLFGFHQAVACAEAGVTLISPFVGRILDWYKKKTGRAEYPGPEDPGVISVTKIYNYYKKFGYPTEVMGASFRNIGEIIELAGCDLLTISPALLQELQNTTGELKRKLDPAIAATLDIEKVAMDEATFRKMHAADEMASEKLEEGIKGFTKALETLEDLLRRHLARIEGEATLTHAAEELFHVYDLDGDGIITREEWLGTDAVFDALDANHDGKVTPEDMGAGLGVVLHLAQAK.

Lys134 functions as the Schiff-base intermediate with substrate in the catalytic mechanism. 2 EF-hand domains span residues 329–364 (TLTHAAEELFHVYDLDGDGIITREEWLGTDAVFDAL) and 365–387 (DANHDGKVTPEDMGAGLGVVLHL). Positions 342, 344, 346, 353, 365, 367, 369, 371, and 376 each coordinate Ca(2+).

It belongs to the transaldolase family. Type 1 subfamily.

Its subcellular location is the cytoplasm. The enzyme catalyses D-sedoheptulose 7-phosphate + D-glyceraldehyde 3-phosphate = D-erythrose 4-phosphate + beta-D-fructose 6-phosphate. Its pathway is carbohydrate degradation; pentose phosphate pathway; D-glyceraldehyde 3-phosphate and beta-D-fructose 6-phosphate from D-ribose 5-phosphate and D-xylulose 5-phosphate (non-oxidative stage): step 2/3. Transaldolase is important for the balance of metabolites in the pentose-phosphate pathway. The chain is Transaldolase from Thermosynechococcus vestitus (strain NIES-2133 / IAM M-273 / BP-1).